We begin with the raw amino-acid sequence, 65 residues long: Protein translocase subunit SecE (65 aa).

The chain crosses the membrane as a helical span at residues 38 to 58; that stretch reads IVIVTVVFFLIFFYALDLGIG.

This sequence belongs to the SecE/SEC61-gamma family. In terms of assembly, component of the Sec protein translocase complex. Heterotrimer consisting of SecY, SecE and SecG subunits. The heterotrimers can form oligomers, although 1 heterotrimer is thought to be able to translocate proteins. Interacts with the ribosome. Interacts with SecDF, and other proteins may be involved. Interacts with SecA.

It is found in the cell membrane. Essential subunit of the Sec protein translocation channel SecYEG. Clamps together the 2 halves of SecY. May contact the channel plug during translocation. This Staphylococcus carnosus (strain TM300) protein is Protein translocase subunit SecE.